The primary structure comprises 144 residues: MIKLECLQDPSPRKRRTKLLGRGPSSGHGKTSGRGHKGDGSRSGYKRRFGYEGGGVPLYRRVPTRGFSHKRFDKCVEEITTQRLNEIFDNGAEVSLEALKERKVIHRETSRVKVILKGALDKKLVWKDAAIVLSEGVKSLIEAV.

The disordered stretch occupies residues 1 to 48 (MIKLECLQDPSPRKRRTKLLGRGPSSGHGKTSGRGHKGDGSRSGYKRR).

The protein belongs to the universal ribosomal protein uL15 family. Part of the 50S ribosomal subunit.

Binds to the 23S rRNA. This chain is Large ribosomal subunit protein uL15, found in Chlamydia trachomatis serovar L2 (strain ATCC VR-902B / DSM 19102 / 434/Bu).